We begin with the raw amino-acid sequence, 130 residues long: Small ribosomal subunit protein uS9 (130 aa).

Belongs to the universal ribosomal protein uS9 family.

This Burkholderia thailandensis (strain ATCC 700388 / DSM 13276 / CCUG 48851 / CIP 106301 / E264) protein is Small ribosomal subunit protein uS9.